An 860-amino-acid polypeptide reads, in one-letter code: Leucine--tRNA ligase (860 aa).

The 'HIGH' region motif lies at 42 to 52 (PYPSGRLHMGH). Positions 619–623 (KMSKS) match the 'KMSKS' region motif. Position 622 (Lys-622) interacts with ATP.

This sequence belongs to the class-I aminoacyl-tRNA synthetase family.

The protein resides in the cytoplasm. The catalysed reaction is tRNA(Leu) + L-leucine + ATP = L-leucyl-tRNA(Leu) + AMP + diphosphate. This is Leucine--tRNA ligase from Escherichia coli (strain ATCC 8739 / DSM 1576 / NBRC 3972 / NCIMB 8545 / WDCM 00012 / Crooks).